The primary structure comprises 212 residues: MVCGGFTCSKNALCALNVVYMLVGVLLIIVAAWGKGFGIVSSIHIIGGVIAIGVFLLLIAIIGLIGAVSHHQVMLFIYMVVLILVFIFQFIVSCSCLAMNRSQQEYLLNTTWNRMSNETRLNLEKTLDCCGFLNTTEGRDEFKQDVALCIQVCSDPHKCPSCGDKMLNHADEALKILGGVGLFFSFTEILGVWLAFRYRNQKDPRANPSAFL.

At 1–12 (MVCGGFTCSKNA) the chain is on the cytoplasmic side. The helical transmembrane segment at 13-33 (LCALNVVYMLVGVLLIIVAAW) threads the bilayer. The Extracellular portion of the chain corresponds to 34–44 (GKGFGIVSSIH). Residues 45 to 65 (IIGGVIAIGVFLLLIAIIGLI) form a helical membrane-spanning segment. The Cytoplasmic portion of the chain corresponds to 66-72 (GAVSHHQ). The chain crosses the membrane as a helical span at residues 73–93 (VMLFIYMVVLILVFIFQFIVS). The Extracellular portion of the chain corresponds to 94-175 (CSCLAMNRSQ…MLNHADEALK (82 aa)). N-linked (GlcNAc...) asparagine glycans are attached at residues Asn-100, Asn-109, Asn-117, and Asn-134. A helical transmembrane segment spans residues 176-196 (ILGGVGLFFSFTEILGVWLAF). Residues 197–212 (RYRNQKDPRANPSAFL) lie on the Cytoplasmic side of the membrane.

This sequence belongs to the tetraspanin (TM4SF) family.

The protein localises to the membrane. This is Tetraspanin-31-B (tspan31-b) from Xenopus laevis (African clawed frog).